The sequence spans 230 residues: TPR repeat-containing protein BB_0298 (230 aa).

TPR repeat units follow at residues 69-102 (ARFFNLIGLEFFKLGQYGPAIEYFAKNLEINPNN) and 183-216 (FEFLMLRGANYYSLGDLGNAILFYDKASKKASTE).

This Borreliella burgdorferi (strain ATCC 35210 / DSM 4680 / CIP 102532 / B31) (Borrelia burgdorferi) protein is TPR repeat-containing protein BB_0298.